A 317-amino-acid polypeptide reads, in one-letter code: tRNA pseudouridine synthase B (317 aa).

The active-site Nucleophile is the Asp-47.

This sequence belongs to the pseudouridine synthase TruB family. Type 1 subfamily.

The enzyme catalyses uridine(55) in tRNA = pseudouridine(55) in tRNA. Responsible for synthesis of pseudouridine from uracil-55 in the psi GC loop of transfer RNAs. This is tRNA pseudouridine synthase B from Shewanella sp. (strain MR-7).